The sequence spans 333 residues: HTH-type transcriptional repressor PurR (333 aa).

Residues 2 to 56 (ATIKDVAKLASVSTTTVSHVINKTRFVAEATQKRVWEAVEELNYAPSAVARSLKC) form the HTH lacI-type domain. Positions 4-23 (IKDVAKLASVSTTTVSHVIN) form a DNA-binding region, H-T-H motif. The DNA-binding element occupies 48–56 (SAVARSLKC). 5 residues coordinate hypoxanthine: phenylalanine 73, lysine 189, threonine 191, phenylalanine 220, and aspartate 274.

Homodimer.

Its pathway is purine metabolism; purine nucleotide biosynthesis [regulation]. Is the main repressor of the genes involved in the de novo synthesis of purine nucleotides, regulating purB, purC, purEK, purF, purHD, purL, purMN and guaBA expression. PurR is allosterically activated to bind its cognate DNA by binding the purine corepressors, hypoxanthine or guanine, thereby effecting transcription repression. The protein is HTH-type transcriptional repressor PurR of Aliivibrio salmonicida (strain LFI1238) (Vibrio salmonicida (strain LFI1238)).